The following is a 231-amino-acid chain: 2-C-methyl-D-erythritol 4-phosphate cytidylyltransferase (231 aa).

This sequence belongs to the IspD/TarI cytidylyltransferase family. IspD subfamily.

It carries out the reaction 2-C-methyl-D-erythritol 4-phosphate + CTP + H(+) = 4-CDP-2-C-methyl-D-erythritol + diphosphate. The protein operates within isoprenoid biosynthesis; isopentenyl diphosphate biosynthesis via DXP pathway; isopentenyl diphosphate from 1-deoxy-D-xylulose 5-phosphate: step 2/6. Functionally, catalyzes the formation of 4-diphosphocytidyl-2-C-methyl-D-erythritol from CTP and 2-C-methyl-D-erythritol 4-phosphate (MEP). This chain is 2-C-methyl-D-erythritol 4-phosphate cytidylyltransferase, found in Pseudoalteromonas atlantica (strain T6c / ATCC BAA-1087).